The following is a 133-amino-acid chain: Large-conductance mechanosensitive channel (133 aa).

Helical transmembrane passes span 19–39 (IDLAVGVVIGGAFGKIVTSLV) and 79–99 (IQSVVDFIIISFSIFLFVKLI).

It belongs to the MscL family. In terms of assembly, homopentamer.

It is found in the cell membrane. Functionally, channel that opens in response to stretch forces in the membrane lipid bilayer. May participate in the regulation of osmotic pressure changes within the cell. This chain is Large-conductance mechanosensitive channel, found in Clostridium tetani (strain Massachusetts / E88).